We begin with the raw amino-acid sequence, 326 residues long: MNSVKIGIDLYGGDNAPSSVVEGALFALKNKFLSPEELVIVGNEISKEDLDKISNLQIVPAKNLVSNETKPTEVLKMKESSMYVGCEMLKNNELNAFVSAGNTGALLSSGTFVAGRLPGIKRPALVLALPSKSNKPKILVDAGANAEVKAEHFYDFAREGIAYAKFLNLENPRVGILNIGSEDEKGNSIVREASNLLKEEKKFNYVGYVEARELFDDTCDIIVTDGFTGNNVLKTMEGTAYFILHELKETIKKGGLFTKLGALFLRGSLKSLVNKIDYRSYGGTFFLGVNGVLVKAHGSSDAEAIANALYVAYRAAKFDLIEKIEI.

Belongs to the PlsX family. In terms of assembly, homodimer. Probably interacts with PlsY.

It is found in the cytoplasm. It catalyses the reaction a fatty acyl-[ACP] + phosphate = an acyl phosphate + holo-[ACP]. It participates in lipid metabolism; phospholipid metabolism. In terms of biological role, catalyzes the reversible formation of acyl-phosphate (acyl-PO(4)) from acyl-[acyl-carrier-protein] (acyl-ACP). This enzyme utilizes acyl-ACP as fatty acyl donor, but not acyl-CoA. The polypeptide is Phosphate acyltransferase (Petrotoga mobilis (strain DSM 10674 / SJ95)).